Reading from the N-terminus, the 289-residue chain is tRNA pseudouridine synthase A (289 aa).

D53 (nucleophile) is an active-site residue. Residue Y119 coordinates substrate.

Belongs to the tRNA pseudouridine synthase TruA family. In terms of assembly, homodimer.

It catalyses the reaction uridine(38/39/40) in tRNA = pseudouridine(38/39/40) in tRNA. In terms of biological role, formation of pseudouridine at positions 38, 39 and 40 in the anticodon stem and loop of transfer RNAs. The chain is tRNA pseudouridine synthase A from Corynebacterium glutamicum (strain ATCC 13032 / DSM 20300 / JCM 1318 / BCRC 11384 / CCUG 27702 / LMG 3730 / NBRC 12168 / NCIMB 10025 / NRRL B-2784 / 534).